The chain runs to 309 residues: DNA replication terminus site-binding protein (309 aa).

Belongs to the Tus family.

The protein localises to the cytoplasm. In terms of biological role, trans-acting protein required for termination of DNA replication. Binds to DNA replication terminator sequences (terA to terF) to prevent the passage of replication forks. The termination efficiency will be affected by the affinity of this protein for the terminator sequence. This chain is DNA replication terminus site-binding protein, found in Yersinia enterocolitica serotype O:8 / biotype 1B (strain NCTC 13174 / 8081).